The primary structure comprises 565 residues: NAD-dependent malic enzyme (565 aa).

Tyr-104 acts as the Proton donor in catalysis. Arg-157 lines the NAD(+) pocket. Lys-175 (proton acceptor) is an active-site residue. A divalent metal cation is bound by residues Glu-246, Asp-247, and Asp-270. The NAD(+) site is built by Asp-270 and Asn-418.

It belongs to the malic enzymes family. In terms of assembly, homotetramer. The cofactor is Mg(2+). Mn(2+) is required as a cofactor.

It carries out the reaction (S)-malate + NAD(+) = pyruvate + CO2 + NADH. It catalyses the reaction oxaloacetate + H(+) = pyruvate + CO2. In Shigella sonnei (strain Ss046), this protein is NAD-dependent malic enzyme.